Consider the following 367-residue polypeptide: Chorismate synthase (367 aa).

The tract at residues 39-60 (EEFSHDLQRRASGKSRHTSARR) is disordered. NADP(+) contacts are provided by Arg-48 and Arg-54. FMN-binding positions include 125–127 (RSS), 238–239 (NA), Gly-278, 293–297 (KPTSS), and Arg-319.

Belongs to the chorismate synthase family. Homotetramer. FMNH2 serves as cofactor.

It catalyses the reaction 5-O-(1-carboxyvinyl)-3-phosphoshikimate = chorismate + phosphate. Its pathway is metabolic intermediate biosynthesis; chorismate biosynthesis; chorismate from D-erythrose 4-phosphate and phosphoenolpyruvate: step 7/7. Catalyzes the anti-1,4-elimination of the C-3 phosphate and the C-6 proR hydrogen from 5-enolpyruvylshikimate-3-phosphate (EPSP) to yield chorismate, which is the branch point compound that serves as the starting substrate for the three terminal pathways of aromatic amino acid biosynthesis. This reaction introduces a second double bond into the aromatic ring system. This chain is Chorismate synthase, found in Xanthomonas oryzae pv. oryzae (strain MAFF 311018).